The primary structure comprises 586 residues: Ferredoxin--nitrite reductase, chloroplastic (586 aa).

Residues 1–18 (MTSFSLTFTSPLLPSSST) are compositionally biased toward low complexity. The interval 1 to 20 (MTSFSLTFTSPLLPSSSTKP) is disordered. Residues 1–25 (MTSFSLTFTSPLLPSSSTKPKRSVL) constitute a chloroplast transit peptide. Residue lysine 103 forms a Glycyl lysine isopeptide (Lys-Gly) (interchain with G-Cter in ubiquitin) linkage. Cysteine 464, cysteine 470, cysteine 505, and cysteine 509 together coordinate [4Fe-4S] cluster. Cysteine 509 lines the siroheme pocket.

This sequence belongs to the nitrite and sulfite reductase 4Fe-4S domain family. As to quaternary structure, monomer. Siroheme serves as cofactor. The cofactor is [4Fe-4S] cluster.

Its subcellular location is the plastid. The protein resides in the chloroplast. The catalysed reaction is 6 oxidized [2Fe-2S]-[ferredoxin] + NH4(+) + 2 H2O = nitrite + 6 reduced [2Fe-2S]-[ferredoxin] + 8 H(+). It functions in the pathway nitrogen metabolism; nitrate reduction (assimilation). In terms of biological role, catalyzes the six-electron reduction of nitrite to ammonium. The chain is Ferredoxin--nitrite reductase, chloroplastic (NIR1) from Arabidopsis thaliana (Mouse-ear cress).